The primary structure comprises 548 residues: Probable malate:quinone oxidoreductase (548 aa).

A disordered region spans residues 521-548 (DKPQAADSTPKPQLKPKPVQKEVADIAL). Over residues 539-548 (VQKEVADIAL) the composition is skewed to basic and acidic residues.

Belongs to the MQO family. The cofactor is FAD.

It catalyses the reaction (S)-malate + a quinone = a quinol + oxaloacetate. The protein operates within carbohydrate metabolism; tricarboxylic acid cycle; oxaloacetate from (S)-malate (quinone route): step 1/1. In Escherichia coli (strain ATCC 8739 / DSM 1576 / NBRC 3972 / NCIMB 8545 / WDCM 00012 / Crooks), this protein is Probable malate:quinone oxidoreductase.